The following is a 152-amino-acid chain: Avidin (152 aa).

An N-terminal signal peptide occupies residues 1-24; sequence MVHATSPLLLLLLLSLALVAPGLS. Residues 26–149 form the Avidin-like domain; that stretch reads RKCSLTGKWT…GINIFTRLRT (124 aa). An intrachain disulfide couples cysteine 28 to cysteine 107. Asparagine 41 carries an N-linked (GlcNAc...) asparagine glycan. A biotin-binding site is contributed by tyrosine 57.

This sequence belongs to the avidin/streptavidin family. Homotetramer. Post-translationally, N-linked glycan at Asn-41 consists of GlcNAc(beta1-2)Man(alpha1-3)[GlcNAc(beta1-4)][Man(alpha1-?)Man(alpha1-6)] Man(beta1-4)GlcNAc(beta1-4)GlcNAc. As to expression, synthesized in hen oviduct and concentrated in egg white (where it represents 0.05% of the total protein).

The protein localises to the secreted. The biological function of avidin is not known. Forms a strong non-covalent specific complex with biotin (one molecule of biotin per subunit of avidin). In Gallus gallus (Chicken), this protein is Avidin (AVD).